Reading from the N-terminus, the 2053-residue chain is Nonribosomal peptide synthetase pboA (2053 aa).

An adenylation 1 region spans residues Ala-16–Arg-402. The Carrier 1 domain maps to Arg-503–Arg-579. O-(pantetheine 4'-phosphoryl)serine is present on Ser-540. The segment at Asn-611 to Gln-896 is condensation 1. The tract at residues Ser-1034 to Arg-1418 is adenylation 2. The region spanning Val-1515 to Ile-1593 is the Carrier 2 domain. Ser-1553 carries the O-(pantetheine 4'-phosphoryl)serine modification. Residues Asn-1630–Asp-1981 form a condensation 2 region.

The protein belongs to the NRP synthetase family. It depends on pantetheine 4'-phosphate as a cofactor.

It participates in secondary metabolite biosynthesis. Functionally, nonribosomal peptide synthetase; part of the gene cluster that mediates the biosynthesis of protubonine B, a hydroxylated and diacetylated cyclo-L-Trp-L-Leu derivative. The first step of the protubonine B synthesis is performed by the nonribosomal peptide synthetase pboA that catalyzes the formation of cyclo-L-Trp-L-Leu by condensing L-Leu with L-Trp. The flavin-dependent monooxygenase pboD is responsible for hydroxylation at C-3 of the indole ring and subsequent formation of the pyrrolidine ring, leadind to protubonine D. Protubonine D is further diacetylated by two acetyltransferases, pboB and pboC, to form the final product protubonine B via protubonine C. The chain is Nonribosomal peptide synthetase pboA from Aspergillus ustus.